The following is a 301-amino-acid chain: Sulfate adenylyltransferase subunit 2 (301 aa).

The segment at 282 to 301 (RLIDRDEAGSMEKKKREGYF) is disordered.

This sequence belongs to the PAPS reductase family. CysD subfamily. Heterodimer composed of CysD, the smaller subunit, and CysN.

The enzyme catalyses sulfate + ATP + H(+) = adenosine 5'-phosphosulfate + diphosphate. It functions in the pathway sulfur metabolism; hydrogen sulfide biosynthesis; sulfite from sulfate: step 1/3. In terms of biological role, with CysN forms the ATP sulfurylase (ATPS) that catalyzes the adenylation of sulfate producing adenosine 5'-phosphosulfate (APS) and diphosphate, the first enzymatic step in sulfur assimilation pathway. APS synthesis involves the formation of a high-energy phosphoric-sulfuric acid anhydride bond driven by GTP hydrolysis by CysN coupled to ATP hydrolysis by CysD. This is Sulfate adenylyltransferase subunit 2 from Chelativorans sp. (strain BNC1).